A 439-amino-acid polypeptide reads, in one-letter code: DNA primase DnaG (439 aa).

A Toprim domain is found at D169–Y243. Mg(2+)-binding residues include E175, D217, and D219.

Belongs to the archaeal DnaG primase family. Forms a ternary complex with MCM helicase and DNA. It depends on Mg(2+) as a cofactor.

The catalysed reaction is ssDNA + n NTP = ssDNA/pppN(pN)n-1 hybrid + (n-1) diphosphate.. Functionally, RNA polymerase that catalyzes the synthesis of short RNA molecules used as primers for DNA polymerase during DNA replication. The sequence is that of DNA primase DnaG from Methanococcus maripaludis (strain C7 / ATCC BAA-1331).